The sequence spans 164 residues: NAD(P)H-quinone oxidoreductase subunit I, chloroplastic (164 aa).

2 consecutive 4Fe-4S ferredoxin-type domains span residues 55–84 (GRIH…VDWK) and 95–124 (LNYS…MTEE). 8 residues coordinate [4Fe-4S] cluster: C64, C67, C70, C74, C104, C107, C110, and C114.

The protein belongs to the complex I 23 kDa subunit family. In terms of assembly, NDH is composed of at least 16 different subunits, 5 of which are encoded in the nucleus. [4Fe-4S] cluster is required as a cofactor.

Its subcellular location is the plastid. It localises to the chloroplast thylakoid membrane. The enzyme catalyses a plastoquinone + NADH + (n+1) H(+)(in) = a plastoquinol + NAD(+) + n H(+)(out). The catalysed reaction is a plastoquinone + NADPH + (n+1) H(+)(in) = a plastoquinol + NADP(+) + n H(+)(out). In terms of biological role, NDH shuttles electrons from NAD(P)H:plastoquinone, via FMN and iron-sulfur (Fe-S) centers, to quinones in the photosynthetic chain and possibly in a chloroplast respiratory chain. The immediate electron acceptor for the enzyme in this species is believed to be plastoquinone. Couples the redox reaction to proton translocation, and thus conserves the redox energy in a proton gradient. The polypeptide is NAD(P)H-quinone oxidoreductase subunit I, chloroplastic (Daucus carota (Wild carrot)).